The following is an 877-amino-acid chain: GPI ethanolamine phosphate transferase 2 (877 aa).

2 N-linked (GlcNAc...) asparagine glycosylation sites follow: Asn-190 and Asn-368. 5 consecutive transmembrane segments (helical) span residues 409–429 (VDIY…FGLF), 443–463 (YNWY…ASSL), 464–484 (IEEE…ALYF), 528–548 (VDLL…LIYS), and 570–590 (DFGS…SFSF). An N-linked (GlcNAc...) asparagine glycan is attached at Asn-611. 6 helical membrane-spanning segments follow: residues 634–654 (IHLS…RIVL), 683–703 (EIVP…KLLA), 716–736 (LMII…FSMG), 758–778 (VFLV…FWSL), 817–837 (LAGF…CFNL), and 854–876 (FASW…ILAL).

It belongs to the PIGG/PIGN/PIGO family. PIGG subfamily.

It localises to the endoplasmic reticulum membrane. The protein operates within glycolipid biosynthesis; glycosylphosphatidylinositol-anchor biosynthesis. Its function is as follows. Ethanolamine phosphate transferase involved in glycosylphosphatidylinositol-anchor biosynthesis. Transfers ethanolamine phosphate to the GPI second mannose. This Debaryomyces hansenii (strain ATCC 36239 / CBS 767 / BCRC 21394 / JCM 1990 / NBRC 0083 / IGC 2968) (Yeast) protein is GPI ethanolamine phosphate transferase 2 (LAS21).